Here is a 185-residue protein sequence, read N- to C-terminus: Probable chorismate pyruvate-lyase (185 aa).

Substrate-binding residues include R84, L122, and E178.

It belongs to the UbiC family.

It is found in the cytoplasm. It catalyses the reaction chorismate = 4-hydroxybenzoate + pyruvate. Its pathway is cofactor biosynthesis; ubiquinone biosynthesis. Its function is as follows. Removes the pyruvyl group from chorismate, with concomitant aromatization of the ring, to provide 4-hydroxybenzoate (4HB) for the ubiquinone pathway. The chain is Probable chorismate pyruvate-lyase from Hydrogenovibrio crunogenus (strain DSM 25203 / XCL-2) (Thiomicrospira crunogena).